Here is a 128-residue protein sequence, read N- to C-terminus: Azurin (128 aa).

Residues 1-128 (AECKVTVDST…SMMKGTVTLK (128 aa)) form the Plastocyanin-like domain. An intrachain disulfide couples Cys-3 to Cys-26. Positions 46, 112, 117, and 121 each coordinate Cu cation.

The protein localises to the periplasm. In terms of biological role, transfers electrons from cytochrome c551 to cytochrome oxidase. This chain is Azurin, found in Pseudomonas putida (Arthrobacter siderocapsulatus).